Consider the following 544-residue polypeptide: High affinity immunoglobulin alpha and immunoglobulin mu Fc receptor (544 aa).

The signal sequence occupies residues 1-16 (MPLFLILCLLQGSSFA). Residues 17–462 (LPQKRPHPRW…TFPEDESSSR (446 aa)) are Extracellular-facing. In terms of domain architecture, Ig-like V-type spans 61–169 (PNALKGSRLV…NMLFLSMNLT (109 aa)). Positions 75 to 97 (GGAVTIQCHYAPSSVNRHQRKYW) are mediates immunoglobulin Fc fragment-binding. An intrachain disulfide couples cysteine 82 to cysteine 153. A glycan (N-linked (GlcNAc...) asparagine) is linked at asparagine 167. The segment at 218-325 (DTVASTPGTS…TTKADRPRED (108 aa)) is disordered. 2 stretches are compositionally biased toward polar residues: residues 220-232 (VAST…TTAS) and 280-291 (ASKSRSMSNTTE). Over residues 307–325 (ASKDRREITTTKADRPRED) the composition is skewed to basic and acidic residues. The chain crosses the membrane as a helical span at residues 463 to 483 (TLAPVSTMLALFMLMALVLLQ). At 484 to 544 (RKLRRRRTSQ…LTAPERNPGP (61 aa)) the chain is on the cytoplasmic side. Positions 511-544 (PQPDQLPHVERKMLQDDSLPAGASLTAPERNPGP) are disordered.

In terms of assembly, interacts with IGHM; this interaction facilitates the endocytosis of IgM-coated microbes or IgM-antigen immune complexes. Post-translationally, N-glycosylated.

Its subcellular location is the cell membrane. In terms of biological role, functions as a receptor for the Fc fragment of IgA and IgM. Binds IgA and IgM with high affinity and mediates their endocytosis. May function in the immune response to microbes mediated by IgA and IgM. The protein is High affinity immunoglobulin alpha and immunoglobulin mu Fc receptor (FCAMR) of Pongo abelii (Sumatran orangutan).